The sequence spans 154 residues: Large ribosomal subunit protein uL13 (154 aa).

The protein belongs to the universal ribosomal protein uL13 family. Part of the 50S ribosomal subunit.

This protein is one of the early assembly proteins of the 50S ribosomal subunit, although it is not seen to bind rRNA by itself. It is important during the early stages of 50S assembly. The protein is Large ribosomal subunit protein uL13 of Rhodopseudomonas palustris (strain ATCC BAA-98 / CGA009).